The primary structure comprises 131 residues: Profilin-4 (131 aa).

A disulfide bridge connects residues Cys13 and Cys115. Residues 81–97 carry the Involved in PIP2 interaction motif; the sequence is AVIRGKKGAGGITVKKT. A Phosphothreonine modification is found at Thr111.

This sequence belongs to the profilin family. As to quaternary structure, occurs in many kinds of cells as a complex with monomeric actin in a 1:1 ratio. Phosphorylated by MAP kinases.

Its subcellular location is the cytoplasm. The protein resides in the cytoskeleton. Functionally, binds to actin and affects the structure of the cytoskeleton. At high concentrations, profilin prevents the polymerization of actin, whereas it enhances it at low concentrations. The polypeptide is Profilin-4 (Olea europaea (Common olive)).